The primary structure comprises 407 residues: Methylthioribose kinase (407 aa).

ATP-binding positions include asparagine 40, lysine 57, and 111-113 (EDL). Residue aspartate 229 coordinates substrate. Residue 246–248 (DAE) participates in ATP binding. Arginine 344 contributes to the substrate binding site.

This sequence belongs to the methylthioribose kinase family. Homodimer.

The catalysed reaction is 5-(methylsulfanyl)-D-ribose + ATP = 5-(methylsulfanyl)-alpha-D-ribose 1-phosphate + ADP + H(+). It participates in amino-acid biosynthesis; L-methionine biosynthesis via salvage pathway; S-methyl-5-thio-alpha-D-ribose 1-phosphate from S-methyl-5'-thioadenosine (hydrolase route): step 2/2. Functionally, catalyzes the phosphorylation of methylthioribose into methylthioribose-1-phosphate. The polypeptide is Methylthioribose kinase (Yersinia pseudotuberculosis serotype O:1b (strain IP 31758)).